The sequence spans 105 residues: Thioredoxin (105 aa).

In terms of domain architecture, Thioredoxin spans 2 to 105 (VKQIESKYAF…KLEATINELI (104 aa)). Lys-3 carries the N6-acetyllysine modification. Lys-8 is modified (N6-succinyllysine). Active-site nucleophile residues include Cys-32 and Cys-35. Cysteines 32 and 35 form a disulfide. Position 39 is an N6-acetyllysine (Lys-39). Cys-62 and Cys-69 each carry S-nitrosocysteine. Cys-73 bears the S-nitrosocysteine; alternate mark. Position 94 is an N6-acetyllysine; alternate (Lys-94). Lys-94 is modified (N6-succinyllysine; alternate).

This sequence belongs to the thioredoxin family. As to quaternary structure, homodimer; disulfide-linked. Interacts with TXNIP through the redox-active site. Interacts with MAP3K5 and CASP3. Interacts with APEX1; the interaction stimulates the FOS/JUN AP-1 DNA-binding activity in a redox-dependent manner. In the fully reduced protein, both Cys-69 and Cys-73 are nitrosylated in response to nitric oxide (NO). When two disulfide bonds are present in the protein, only Cys-73 is nitrosylated. Cys-73 can serve as donor for nitrosylation of target proteins.

It localises to the nucleus. The protein localises to the cytoplasm. Its subcellular location is the secreted. In terms of biological role, participates in various redox reactions through the reversible oxidation of its active center dithiol to a disulfide and catalyzes dithiol-disulfide exchange reactions. Plays a role in the reversible S-nitrosylation of cysteine residues in target proteins, and thereby contributes to the response to intracellular nitric oxide. Nitrosylates the active site Cys of CASP3 in response to nitric oxide (NO), and thereby inhibits caspase-3 activity. Induces the FOS/JUN AP-1 DNA binding activity in ionizing radiation (IR) cells through its oxidation/reduction status and stimulates AP-1 transcriptional activity. The protein is Thioredoxin (TXN) of Bos taurus (Bovine).